The following is a 235-amino-acid chain: RNA pyrophosphohydrolase (235 aa).

Residues glycine 6 to threonine 149 enclose the Nudix hydrolase domain. The short motif at glycine 38–glycine 59 is the Nudix box element. The segment at alanine 184–threonine 235 is disordered.

The protein belongs to the Nudix hydrolase family. RppH subfamily. The cofactor is a divalent metal cation.

Accelerates the degradation of transcripts by removing pyrophosphate from the 5'-end of triphosphorylated RNA, leading to a more labile monophosphorylated state that can stimulate subsequent ribonuclease cleavage. This chain is RNA pyrophosphohydrolase, found in Polaromonas naphthalenivorans (strain CJ2).